Consider the following 98-residue polypeptide: ESAT-6-like protein EsxM (98 aa).

The protein belongs to the WXG100 family. CFP-10 subfamily.

It localises to the secreted. The polypeptide is ESAT-6-like protein EsxM (esxM) (Mycobacterium bovis (strain ATCC BAA-935 / AF2122/97)).